Consider the following 218-residue polypeptide: Protein-methionine-sulfoxide reductase heme-binding subunit MsrQ (218 aa).

5 helical membrane passes run 14–34 (LVHA…WQVW), 60–80 (FLLI…AVVI), 86–106 (LGLY…TLDL), 121–141 (PYIT…ITST), and 155–175 (LHTL…WLVK).

The protein belongs to the MsrQ family. In terms of assembly, heterodimer of a catalytic subunit (MsrP) and a heme-binding subunit (MsrQ). FMN is required as a cofactor. Heme b serves as cofactor.

The protein localises to the cell inner membrane. In terms of biological role, part of the MsrPQ system that repairs oxidized periplasmic proteins containing methionine sulfoxide residues (Met-O), using respiratory chain electrons. Thus protects these proteins from oxidative-stress damage caused by reactive species of oxygen and chlorine generated by the host defense mechanisms. MsrPQ is essential for the maintenance of envelope integrity under bleach stress, rescuing a wide series of structurally unrelated periplasmic proteins from methionine oxidation. MsrQ provides electrons for reduction to the reductase catalytic subunit MsrP, using the quinone pool of the respiratory chain. In Xanthomonas euvesicatoria pv. vesicatoria (strain 85-10) (Xanthomonas campestris pv. vesicatoria), this protein is Protein-methionine-sulfoxide reductase heme-binding subunit MsrQ.